A 475-amino-acid chain; its full sequence is Aspartyl/glutamyl-tRNA(Asn/Gln) amidotransferase subunit B (475 aa).

The protein belongs to the GatB/GatE family. GatB subfamily. Heterotrimer of A, B and C subunits.

The catalysed reaction is L-glutamyl-tRNA(Gln) + L-glutamine + ATP + H2O = L-glutaminyl-tRNA(Gln) + L-glutamate + ADP + phosphate + H(+). It catalyses the reaction L-aspartyl-tRNA(Asn) + L-glutamine + ATP + H2O = L-asparaginyl-tRNA(Asn) + L-glutamate + ADP + phosphate + 2 H(+). Functionally, allows the formation of correctly charged Asn-tRNA(Asn) or Gln-tRNA(Gln) through the transamidation of misacylated Asp-tRNA(Asn) or Glu-tRNA(Gln) in organisms which lack either or both of asparaginyl-tRNA or glutaminyl-tRNA synthetases. The reaction takes place in the presence of glutamine and ATP through an activated phospho-Asp-tRNA(Asn) or phospho-Glu-tRNA(Gln). The sequence is that of Aspartyl/glutamyl-tRNA(Asn/Gln) amidotransferase subunit B from Agathobacter rectalis (strain ATCC 33656 / DSM 3377 / JCM 17463 / KCTC 5835 / VPI 0990) (Eubacterium rectale).